The sequence spans 351 residues: Deoxyuridylate hydroxymethyltransferase (351 aa).

This sequence belongs to the thymidylate synthase family.

The catalysed reaction is dUMP + (6R)-5,10-methylene-5,6,7,8-tetrahydrofolate + H2O = 5-hydroxymethyl-dUMP + (6S)-5,6,7,8-tetrahydrofolate. Its function is as follows. Catalyzes formation of 5-hydroxymethyldeoxyuridylate (5HMdUMP) as a step in the pathway that replaces dTMP by thymidine hypermodifications in the viral genome. As a final result of the pathway of hypermodification, 5-aminoethyl-2'-deoxyuridine (5-NedU) substitutes for about 30% of thymidines in the viral DNA. These modifications probably prevent degradation of viral genome by the host restriction-modification antiviral defense system. This Pseudomonas aeruginosa protein is Deoxyuridylate hydroxymethyltransferase.